The sequence spans 363 residues: Fructose-bisphosphate aldolase 2 (363 aa).

S61 is a binding site for D-glyceraldehyde 3-phosphate. D109 functions as the Proton donor in the catalytic mechanism. The Zn(2+) site is built by H110, D144, E174, and H226. G227 provides a ligand contact to dihydroxyacetone phosphate. Residue H264 participates in Zn(2+) binding. 265–267 is a dihydroxyacetone phosphate binding site; it reads GGS.

It belongs to the class II fructose-bisphosphate aldolase family. In terms of assembly, homodimer. It depends on Zn(2+) as a cofactor.

It carries out the reaction beta-D-fructose 1,6-bisphosphate = D-glyceraldehyde 3-phosphate + dihydroxyacetone phosphate. The protein operates within carbohydrate degradation; glycolysis; D-glyceraldehyde 3-phosphate and glycerone phosphate from D-glucose: step 4/4. In terms of biological role, catalyzes the aldol condensation of dihydroxyacetone phosphate (DHAP or glycerone-phosphate) with glyceraldehyde 3-phosphate (G3P) to form fructose 1,6-bisphosphate (FBP) in gluconeogenesis and the reverse reaction in glycolysis. This Paracoccidioides lutzii (strain ATCC MYA-826 / Pb01) (Paracoccidioides brasiliensis) protein is Fructose-bisphosphate aldolase 2 (FBA2).